The chain runs to 218 residues: uncharacterized protein (218 aa).

The protein belongs to the HAD-like hydrolase superfamily.

The protein resides in the cytoplasm. Its subcellular location is the nucleus. This is an uncharacterized protein from Saccharomyces cerevisiae (strain ATCC 204508 / S288c) (Baker's yeast).